The sequence spans 264 residues: MSKITSSTLRTFKQEGKKFTALTAYDASFASAFDSEGIDVLLVGDSMGMVLQGHSDTLPVTVDDIAYHTRCVRRGIEHSLLIADMPFMSYATPEQTMVNATTLMQAGASMVKVEGGHWLLESVAMLTERGIPVCAHLGLTPQSVHVFGGFKVQGRDADNAQRILDEAKALEAAGAQLLVVECIPASLAKAITQALTIPVIGIGAGKDTDGQILVMHDVLGISSGYIPRFSKNYLKQTGEIRAAVRAYIDEVAQGVFPGDEHTFN.

Mg(2+)-binding residues include Asp45 and Asp84. 3-methyl-2-oxobutanoate-binding positions include Asp45–Ser46, Asp84, and Lys112. A Mg(2+)-binding site is contributed by Glu114. Glu181 acts as the Proton acceptor in catalysis.

This sequence belongs to the PanB family. Homodecamer; pentamer of dimers. Mg(2+) serves as cofactor.

The protein localises to the cytoplasm. The catalysed reaction is 3-methyl-2-oxobutanoate + (6R)-5,10-methylene-5,6,7,8-tetrahydrofolate + H2O = 2-dehydropantoate + (6S)-5,6,7,8-tetrahydrofolate. It functions in the pathway cofactor biosynthesis; (R)-pantothenate biosynthesis; (R)-pantoate from 3-methyl-2-oxobutanoate: step 1/2. Its function is as follows. Catalyzes the reversible reaction in which hydroxymethyl group from 5,10-methylenetetrahydrofolate is transferred onto alpha-ketoisovalerate to form ketopantoate. This chain is 3-methyl-2-oxobutanoate hydroxymethyltransferase, found in Shewanella halifaxensis (strain HAW-EB4).